The sequence spans 425 residues: Adenylosuccinate synthetase (425 aa).

Residues 12-18 (GDEGKGK) and 40-42 (GHT) each bind GTP. Aspartate 13 (proton acceptor) is an active-site residue. Residues aspartate 13 and glycine 40 each coordinate Mg(2+). IMP-binding positions include 13 to 16 (DEGK), 38 to 41 (NAGH), threonine 129, arginine 143, asparagine 221, threonine 236, and arginine 300. Histidine 41 acts as the Proton donor in catalysis. 296–302 (VTTGRKR) contacts substrate. Residues arginine 302, 328 to 330 (KLD), and 410 to 412 (GVG) each bind GTP.

This sequence belongs to the adenylosuccinate synthetase family. As to quaternary structure, homodimer. Requires Mg(2+) as cofactor.

Its subcellular location is the cytoplasm. The enzyme catalyses IMP + L-aspartate + GTP = N(6)-(1,2-dicarboxyethyl)-AMP + GDP + phosphate + 2 H(+). It participates in purine metabolism; AMP biosynthesis via de novo pathway; AMP from IMP: step 1/2. Plays an important role in the de novo pathway and in the salvage pathway of purine nucleotide biosynthesis. Catalyzes the first committed step in the biosynthesis of AMP from IMP. The protein is Adenylosuccinate synthetase of Phaeosphaeria nodorum (strain SN15 / ATCC MYA-4574 / FGSC 10173) (Glume blotch fungus).